The chain runs to 170 residues: Large ribosomal subunit protein uL10 (170 aa).

The protein belongs to the universal ribosomal protein uL10 family. In terms of assembly, part of the ribosomal stalk of the 50S ribosomal subunit. The N-terminus interacts with L11 and the large rRNA to form the base of the stalk. The C-terminus forms an elongated spine to which L12 dimers bind in a sequential fashion forming a multimeric L10(L12)X complex.

Forms part of the ribosomal stalk, playing a central role in the interaction of the ribosome with GTP-bound translation factors. This chain is Large ribosomal subunit protein uL10, found in Nitratiruptor sp. (strain SB155-2).